A 210-amino-acid chain; its full sequence is Orotate phosphoribosyltransferase (210 aa).

5-phospho-alpha-D-ribose 1-diphosphate-binding positions include Arg-97, Lys-98, and 125 to 133 (NDMVSSGKS). The orotate site is built by Ser-129 and Arg-157.

This sequence belongs to the purine/pyrimidine phosphoribosyltransferase family. PyrE subfamily. In terms of assembly, homodimer. Requires Mg(2+) as cofactor.

The catalysed reaction is orotidine 5'-phosphate + diphosphate = orotate + 5-phospho-alpha-D-ribose 1-diphosphate. It functions in the pathway pyrimidine metabolism; UMP biosynthesis via de novo pathway; UMP from orotate: step 1/2. Its function is as follows. Catalyzes the transfer of a ribosyl phosphate group from 5-phosphoribose 1-diphosphate to orotate, leading to the formation of orotidine monophosphate (OMP). This chain is Orotate phosphoribosyltransferase, found in Chlamydia pneumoniae (Chlamydophila pneumoniae).